We begin with the raw amino-acid sequence, 129 residues long: Small ribosomal subunit protein uS11 (129 aa).

Belongs to the universal ribosomal protein uS11 family. In terms of assembly, part of the 30S ribosomal subunit. Interacts with proteins S7 and S18. Binds to IF-3.

Functionally, located on the platform of the 30S subunit, it bridges several disparate RNA helices of the 16S rRNA. Forms part of the Shine-Dalgarno cleft in the 70S ribosome. In Parvibaculum lavamentivorans (strain DS-1 / DSM 13023 / NCIMB 13966), this protein is Small ribosomal subunit protein uS11.